Consider the following 275-residue polypeptide: MDQSMKPLLSPTERPRRHLTASVISFFLPNQFRLSTILCIGALLQTILCAVLPLRYAAVPCVTVLLISVLTTIQECFQPNTNSFMADVIRGRTTAQIPGKDGTHGREPGKGSVVVFHLGIQYNHPLGVFAPHMREISNRFLAMQQDILRRKDELGLLAVQNWRGSERDSGNTTLIKYFFKDVESIHKFAHEPLHKETWTYYNQHHPGHVGIFHETFITKDGGYESMYVNCHPILLGRGEVKVNNRKDGTEEWVGTLVSADTPGLKSFKARLGRDD.

It catalyses the reaction prefumagillin + NADPH + 2 O2 = fumagillin + acetaldehyde + NADP(+) + H2O. The protein operates within secondary metabolite biosynthesis; terpenoid biosynthesis. Its function is as follows. Monooxygenase; part of the gene cluster that mediates the biosynthesis of fumagillin, a meroterpenoid that has numerous biological activities including irreversible inhibition of human type 2 methionine aminopeptidase (METAP2). Within the pathway, the monooxygenase af470 catalyzes the oxidative cleavage of prefumagillin to yield the final compound of the pathway, fumagillin. The pathway begins with the conversion of farnesyl pyrophosphate (FPP) to beta-trans-bergamotene by the membrane-bound beta-trans-bergamotene synthase af520. The multifunctional cytochrome P450 monooxygenase af510 then converts beta-trans-bergamotene into 5-keto-demethoxyfumagillol via several oxydation steps. 5-keto-demethoxyfumagillol is then subjected to successive C-6 hydroxylation and O-methylation by the dioxygenase af480 and O-methyltransferase af390-400, respectively, to yield 5-keto-fumagillol, which is then stereoselectively reduced by the keto-reductase af490 to 5R-hydroxy-seco-sesquiterpene. The next step is the polyketide transferase af380-catalyzed transfer of a dodecapentaenoyl group synthesized by the polyketide synthase af370 onto 5R-hydroxy-seco-sesquiterpene which leads to the production of prefumagillin. Finally, oxidative cleavage by the monooxygenase af470 converts prefumagillin to fumagillin. The polypeptide is Monooxygenase af470 (Aspergillus fumigatus (strain ATCC MYA-4609 / CBS 101355 / FGSC A1100 / Af293) (Neosartorya fumigata)).